The chain runs to 477 residues: POC1 centriolar protein homolog B (477 aa).

WD repeat units follow at residues 16–55 (GHKA…RAYR), 58–97 (GHKD…KSSE), 100–139 (AHTA…FLYS), 142–181 (RHTH…CVNN), 183–223 (SDSV…LLQH), 226–265 (VHSC…LIYT), and 268–307 (GHTG…VHYR). Positions 449–469 (EQRLSLTEDKLKDCLENQQKL) form a coiled coil.

Belongs to the WD repeat POC1 family. Interacts with POC1A. Interacts with FAM161A. Interacts with CEP44; the interaction is direct and recruits POC1B to centriolar microtubules. Forms a microtubule-associated complex with POC5, CETN2 and FAM161A. Interacts with CCDC15. Phosphorylated in mitotic cells that may be mediated by CDK1.

The protein resides in the cytoplasm. The protein localises to the cytoskeleton. Its subcellular location is the microtubule organizing center. It localises to the centrosome. It is found in the centriole. The protein resides in the cilium basal body. The protein localises to the spindle pole. Plays an important role in centriole assembly and/or stability and ciliogenesis. Involved in early steps of centriole duplication, as well as in the later steps of centriole length control. Acts in concert with POC1A to ensure centriole integrity and proper mitotic spindle formation. Required for primary cilia formation, ciliary length and also cell proliferation. Required for retinal integrity. Acts as a positive regulator of centriole elongation. The chain is POC1 centriolar protein homolog B (Poc1b) from Rattus norvegicus (Rat).